The chain runs to 203 residues: Endo-type membrane-bound lytic murein transglycosylase A (203 aa).

The N-terminal stretch at 1-15 (MKLRWFAFLVVLLAG) is a signal peptide. Cysteine 16 is lipidated: N-palmitoyl cysteine. Cysteine 16 carries S-diacylglycerol cysteine lipidation.

This sequence belongs to the transglycosylase Slt family.

It localises to the cell outer membrane. It catalyses the reaction Endolytic cleavage of the (1-&gt;4)-beta-glycosidic linkage between N-acetylmuramic acid (MurNAc) and N-acetylglucosamine (GlcNAc) residues in peptidoglycan with concomitant formation of a 1,6-anhydrobond in the MurNAc residue.. Murein-degrading enzyme. May play a role in recycling of muropeptides during cell elongation and/or cell division. Preferentially cleaves at a distance of more than two disaccharide units from the ends of the glycan chain. The polypeptide is Endo-type membrane-bound lytic murein transglycosylase A (Escherichia fergusonii (strain ATCC 35469 / DSM 13698 / CCUG 18766 / IAM 14443 / JCM 21226 / LMG 7866 / NBRC 102419 / NCTC 12128 / CDC 0568-73)).